We begin with the raw amino-acid sequence, 498 residues long: MQNYVISLDQGTTSSRAILYDQQGNIVKSAQKEITQHYPQSSWVEHDASEIWGTQSGVLREVLETAGIRPNQIAAIGIANQRETTVIWDKESGKPIHNAIVWQDRRTAPICEELEKQGLKEYIRQNTGLVIDAYFSATKVKWLLDNVNGAREKAKNGQLLFGTVDSWLIWNLTRGHVHVTDYTNASRTMMFNIHELDWDDKILDVLDIPREMLPEIKESSEIYGYTDEHTLGGAQIPISGIAGDQQSALFGQGCFERGMMKNTYGTGCFLLMNTGKDPVISKNGLLTTIAWAIDGEIYYALEGSIFIAGAAVQWLRDNLKLIDTAHDSEYFAGKSDESNGVYVVPAFQGLGAPYWDMYARGAIMGLTRKVGKAEIVRATLESLAYQTRDVVDAMKKDSQLQLQTLRVDGGACQNNLLMQFQSDIIGTTVERPSDIETTARGAAFLAGLAVGFWDKFDLQKVQQIDNKFTPEMDSQERENRYAGWQKAVERTMGWARDS.

Position 12 (T12) interacts with ADP. Positions 12, 13, and 14 each coordinate ATP. T12 contacts sn-glycerol 3-phosphate. R16 is an ADP binding site. Residues R82, E83, Y134, and D244 each contribute to the sn-glycerol 3-phosphate site. 5 residues coordinate glycerol: R82, E83, Y134, D244, and Q245. 2 residues coordinate ADP: T266 and G309. ATP contacts are provided by T266, G309, Q313, and G410. ADP contacts are provided by G410 and N414.

Belongs to the FGGY kinase family. As to quaternary structure, homotetramer and homodimer (in equilibrium).

It carries out the reaction glycerol + ATP = sn-glycerol 3-phosphate + ADP + H(+). It functions in the pathway polyol metabolism; glycerol degradation via glycerol kinase pathway; sn-glycerol 3-phosphate from glycerol: step 1/1. Its activity is regulated as follows. Activated by phosphorylation and inhibited by fructose 1,6-bisphosphate (FBP). Key enzyme in the regulation of glycerol uptake and metabolism. Catalyzes the phosphorylation of glycerol to yield sn-glycerol 3-phosphate. This chain is Glycerol kinase, found in Natranaerobius thermophilus (strain ATCC BAA-1301 / DSM 18059 / JW/NM-WN-LF).